The following is a 156-amino-acid chain: Transmembrane protein 50 homolog (156 aa).

The next 4 helical transmembrane spans lie at 5–25, 45–65, 87–107, and 124–144; these read IMKY…FLWI, IQWI…MANI, VWLF…LWIM, and PGIA…LLVF.

It belongs to the UPF0220 family.

It localises to the membrane. The protein is Transmembrane protein 50 homolog (tmem50) of Dictyostelium discoideum (Social amoeba).